A 690-amino-acid polypeptide reads, in one-letter code: Probable xyloglucan glycosyltransferase 1 (690 aa).

2 helical membrane passes run 120 to 140 (AFLLLSVLLLAVDVAAHAQGW) and 166 to 186 (LEYLAPGLQFLANACVVLFLI). Residue Asp-272 is part of the active site. Substrate is bound by residues Asp-331 and Asp-333. Asp-425 is a catalytic residue. The next 2 membrane-spanning stretches (helical) occupy residues 503 to 523 (LILPFYSFTLFCIILPMTMFV) and 528 to 548 (LPAWVVCYIPATMSLLNILPA). Residues 607 to 637 (QPKQQRVGSAPNLDSLAKESHPKKDSKKKKH) are disordered. Transmembrane regions (helical) follow at residues 640–659 (IYQKELALSFLLLTAAARSL) and 665–685 (IHFYFLLFQGVSFLVVGLDLI).

The protein belongs to the glycosyltransferase 2 family. Plant cellulose synthase-like C subfamily.

The protein localises to the golgi apparatus membrane. Functionally, probable beta-1,4-glucan synthase rather involved in the synthesis of the xyloglucan backbone than cellulose. Seems to work simultaneously with xyloglucan 6-xylosyltransferase. Xyloglucan is a noncellulosic polysaccharides of plant cell wall and consists of a glucan backbone substituted by xylose, galactose and fucose. This chain is Probable xyloglucan glycosyltransferase 1 (CSLC1), found in Oryza sativa subsp. japonica (Rice).